We begin with the raw amino-acid sequence, 275 residues long: Orotidine 5'-phosphate decarboxylase (275 aa).

Lysine 95 functions as the Proton donor in the catalytic mechanism.

It belongs to the OMP decarboxylase family. Type 2 subfamily.

The enzyme catalyses orotidine 5'-phosphate + H(+) = UMP + CO2. It participates in pyrimidine metabolism; UMP biosynthesis via de novo pathway; UMP from orotate: step 2/2. The chain is Orotidine 5'-phosphate decarboxylase from Delftia acidovorans (strain DSM 14801 / SPH-1).